A 481-amino-acid polypeptide reads, in one-letter code: Cholesterol 16,22-dihydroxylase CYP90G4 (481 aa).

A helical transmembrane segment spans residues 4–24; that stretch reads SYLSFFVLSSILVLTLIFFFM. A heme-binding site is contributed by Cys426.

The protein belongs to the cytochrome P450 family. Mainly expressed in leaves and seed pods and, at low levels, in flowers and stems.

The protein localises to the membrane. Its pathway is steroid metabolism; cholesterol metabolism. Its function is as follows. Involved in the biosynthesis of spiroketal steroid and saponin natural products from cholesterol such as diosgenin and analogs (e.g. furostanol and spirostanol), plant defense compounds used as main precursors for the industrial production of steroid hormones. During the 5,6-spiroketalization of cholesterol, catalyzes the hydroxylation of cholesterol to form 16S,22S-dihydroxycholesterol and, possibly, the subsequent conversion of 16S,22S-dihydroxycholesterol into 16-oxo-22-hydroxy-cholesterol and 16-hydroxy-22-oxo-cholesterol. 16-hydroxy-22-oxo-cholesterol submit a spontaneous reaction leading to the production of furostanol-type steroid diastereomers, precursors of diosgenin. The sequence is that of Cholesterol 16,22-dihydroxylase CYP90G4 from Trigonella foenum-graecum (Fenugreek).